The primary structure comprises 179 residues: Orotate phosphoribosyltransferase (179 aa).

5-phospho-alpha-D-ribose 1-diphosphate-binding positions include Arg94, Lys95, Lys98, His100, and 120 to 128; that span reads EDTSTTGNS. 2 residues coordinate orotate: Thr124 and Arg152.

Belongs to the purine/pyrimidine phosphoribosyltransferase family. PyrE subfamily. Homodimer. Requires Mg(2+) as cofactor.

It catalyses the reaction orotidine 5'-phosphate + diphosphate = orotate + 5-phospho-alpha-D-ribose 1-diphosphate. It participates in pyrimidine metabolism; UMP biosynthesis via de novo pathway; UMP from orotate: step 1/2. Catalyzes the transfer of a ribosyl phosphate group from 5-phosphoribose 1-diphosphate to orotate, leading to the formation of orotidine monophosphate (OMP). The polypeptide is Orotate phosphoribosyltransferase (Mycobacterium avium (strain 104)).